The following is a 142-amino-acid chain: Hemoglobin subunit alpha-A (142 aa).

Residues valine 2–arginine 142 enclose the Globin domain. Residues histidine 59 and histidine 88 each coordinate heme b.

The protein belongs to the globin family. In terms of assembly, heterotetramer of two alpha-A chains and two beta chains. As to expression, red blood cells.

In terms of biological role, involved in oxygen transport from the lung to the various peripheral tissues. In Chelonoidis niger (Galapagos giant tortoise), this protein is Hemoglobin subunit alpha-A.